A 270-amino-acid chain; its full sequence is Formamidopyrimidine-DNA glycosylase (270 aa).

The active-site Schiff-base intermediate with DNA is the Pro2. Glu3 functions as the Proton donor in the catalytic mechanism. Lys58 functions as the Proton donor; for beta-elimination activity in the catalytic mechanism. Residues His91, Arg110, and Arg151 each contribute to the DNA site. The FPG-type zinc finger occupies 236–270; the sequence is FVYGRGGEFCKVCGSTLREIRLGQRASVYCPRCQR. The active-site Proton donor; for delta-elimination activity is the Arg260.

This sequence belongs to the FPG family. In terms of assembly, monomer. Zn(2+) serves as cofactor.

The enzyme catalyses Hydrolysis of DNA containing ring-opened 7-methylguanine residues, releasing 2,6-diamino-4-hydroxy-5-(N-methyl)formamidopyrimidine.. The catalysed reaction is 2'-deoxyribonucleotide-(2'-deoxyribose 5'-phosphate)-2'-deoxyribonucleotide-DNA = a 3'-end 2'-deoxyribonucleotide-(2,3-dehydro-2,3-deoxyribose 5'-phosphate)-DNA + a 5'-end 5'-phospho-2'-deoxyribonucleoside-DNA + H(+). Involved in base excision repair of DNA damaged by oxidation or by mutagenic agents. Acts as a DNA glycosylase that recognizes and removes damaged bases. Has a preference for oxidized purines, such as 7,8-dihydro-8-oxoguanine (8-oxoG). Has AP (apurinic/apyrimidinic) lyase activity and introduces nicks in the DNA strand. Cleaves the DNA backbone by beta-delta elimination to generate a single-strand break at the site of the removed base with both 3'- and 5'-phosphates. The polypeptide is Formamidopyrimidine-DNA glycosylase (Pseudomonas aeruginosa (strain LESB58)).